Here is a 470-residue protein sequence, read N- to C-terminus: Magnesium transporter MRS2, mitochondrial (470 aa).

The N-terminal 32 residues, methionine 1–tyrosine 32, are a transit peptide targeting the mitochondrion. Residues alanine 33–lysine 314 are Mitochondrial matrix-facing. The chain crosses the membrane as a helical span at residues valine 315–glycine 333. The YGMN motif lies at tyrosine 332–asparagine 335. Over methionine 334 to glutamate 344 the chain is Mitochondrial intermembrane. A helical transmembrane segment spans residues tryptophan 345 to isoleucine 361. The Mitochondrial matrix segment spans residues threonine 362 to asparagine 470.

The protein belongs to the CorA metal ion transporter (MIT) (TC 1.A.35) family. In terms of assembly, homopentamer. Forms homooligomers. Interacts with MFM1.

It localises to the mitochondrion inner membrane. High-conductance magnesium-selective channel that mediates the influx of magnesium into the mitochondrial matrix. Essential for the splicing of mRNA group II introns in mitochondria by affecting mitochondrial magnesium concentrations, which are critical for group II intron splicing. It also suppresses a variety of mitochondrial intron mutations and its absence may disturb the assembly of mitochondrial membrane complexes. This chain is Magnesium transporter MRS2, mitochondrial (MRS2), found in Saccharomyces cerevisiae (strain ATCC 204508 / S288c) (Baker's yeast).